The primary structure comprises 485 residues: Probable serine/threonine-protein kinase nek1 (485 aa).

A Protein kinase domain is found at 12–283; it reads YLIKSQIGSG…TQQILEQVFI (272 aa). ATP contacts are provided by residues 18-26 and K41; that span reads IGSGSYGNT. Residue D136 is the Proton acceptor of the active site. Positions 354–365 are enriched in polar residues; that stretch reads KNQQQQSPQKLE. Positions 354–419 are disordered; sequence KNQQQQSPQK…NNDKNNNINN (66 aa). A compositionally biased stretch (low complexity) spans 366–419; that stretch reads NNNNNNNDNNNNNNNNNNNNNNNNNNNNNNNNNNNNNNNNNNNNNNDKNNNINN.

It belongs to the protein kinase superfamily. NEK Ser/Thr protein kinase family. NIMA subfamily.

It catalyses the reaction L-seryl-[protein] + ATP = O-phospho-L-seryl-[protein] + ADP + H(+). It carries out the reaction L-threonyl-[protein] + ATP = O-phospho-L-threonyl-[protein] + ADP + H(+). In Dictyostelium discoideum (Social amoeba), this protein is Probable serine/threonine-protein kinase nek1 (nek1).